A 48-amino-acid polypeptide reads, in one-letter code: uncharacterized protein (48 aa).

The helical transmembrane segment at isoleucine 20–histidine 37 threads the bilayer.

It is found in the membrane. This is an uncharacterized protein from Saccharomyces cerevisiae (strain ATCC 204508 / S288c) (Baker's yeast).